The chain runs to 496 residues: Cobyric acid synthase (496 aa).

The 191-residue stretch at 255-445 (DLEIAVLKLP…LHGLLDNGPW (191 aa)) folds into the GATase cobBQ-type domain. The active-site Nucleophile is Cys-336. Residue His-437 is part of the active site.

This sequence belongs to the CobB/CobQ family. CobQ subfamily.

Its pathway is cofactor biosynthesis; adenosylcobalamin biosynthesis. In terms of biological role, catalyzes amidations at positions B, D, E, and G on adenosylcobyrinic A,C-diamide. NH(2) groups are provided by glutamine, and one molecule of ATP is hydrogenolyzed for each amidation. This is Cobyric acid synthase from Parasynechococcus marenigrum (strain WH8102).